The sequence spans 413 residues: Aspartate kinase (413 aa).

2 ACT domains span residues 267–341 (LTIR…GDTK) and 347–413 (IVGV…RQGE).

It belongs to the aspartokinase family. Homotrimer. In the presence of inhibitory amino acids the Stokes radius of the protein increases, suggesting its oligomeric state may change.

It is found in the cytoplasm. The enzyme catalyses L-aspartate + ATP = 4-phospho-L-aspartate + ADP. It functions in the pathway amino-acid biosynthesis; L-lysine biosynthesis via DAP pathway; (S)-tetrahydrodipicolinate from L-aspartate: step 1/4. It participates in amino-acid biosynthesis; L-methionine biosynthesis via de novo pathway; L-homoserine from L-aspartate: step 1/3. Its pathway is amino-acid biosynthesis; L-threonine biosynthesis; L-threonine from L-aspartate: step 1/5. With respect to regulation, activated by L-lysine, L-methionine, and L-isoleucine. L-threonine, at low concentrations, is a mild activator and has a weak inhibitory effect only at concentrations over 10 mM. Strongly feedback inhibited by the concerted combination of L-lysine and L-threonine and slightly feedback inhibited by the concerted combination of L-threonine and L-methionine. Activated by the combination of L-methionine and L-lysine, L-methionine and L-isoleucine and L-lysine and L-isoleucine. Its function is as follows. Involved in the biosynthesis of L-aspartate-beta-semialdehyde which is a central intermediate in the biosynthesis of different amino acids (L-lysine, L-methionine, L-threonine). Catalyzes the phosphorylation of the beta-carboxyl group of L-aspartate to yield 4-phospho-L-aspartate. The polypeptide is Aspartate kinase (Pseudomonas fluorescens (strain SBW25)).